A 253-amino-acid polypeptide reads, in one-letter code: 5'-nucleotidase SurE (253 aa).

Residues Asp8, Asp9, Ser40, and Asn92 each coordinate a divalent metal cation.

This sequence belongs to the SurE nucleotidase family. It depends on a divalent metal cation as a cofactor.

The protein localises to the cytoplasm. It catalyses the reaction a ribonucleoside 5'-phosphate + H2O = a ribonucleoside + phosphate. Functionally, nucleotidase that shows phosphatase activity on nucleoside 5'-monophosphates. The polypeptide is 5'-nucleotidase SurE (Hyphomonas neptunium (strain ATCC 15444)).